Reading from the N-terminus, the 227-residue chain is 2,3-bisphosphoglycerate-dependent phosphoglycerate mutase (227 aa).

Substrate contacts are provided by residues 7 to 14 (RHGQSEWN), 20 to 21 (TG), Arg-59, 86 to 89 (ERHY), Lys-97, 113 to 114 (RR), and 182 to 183 (GN). Catalysis depends on His-8, which acts as the Tele-phosphohistidine intermediate. Catalysis depends on Glu-86, which acts as the Proton donor/acceptor.

This sequence belongs to the phosphoglycerate mutase family. BPG-dependent PGAM subfamily. As to quaternary structure, homodimer.

It catalyses the reaction (2R)-2-phosphoglycerate = (2R)-3-phosphoglycerate. The protein operates within carbohydrate degradation; glycolysis; pyruvate from D-glyceraldehyde 3-phosphate: step 3/5. In terms of biological role, catalyzes the interconversion of 2-phosphoglycerate and 3-phosphoglycerate. In Neisseria meningitidis serogroup B (strain ATCC BAA-335 / MC58), this protein is 2,3-bisphosphoglycerate-dependent phosphoglycerate mutase.